Consider the following 382-residue polypeptide: Histidine biosynthesis bifunctional protein HisB (382 aa).

A histidinol-phosphatase region spans residues 1-190; it reads MQKIVFIDRD…EIYEFLRLPA (190 aa). Catalysis depends on Asp-8, which acts as the Nucleophile. 3 residues coordinate Mg(2+): Asp-8, Asp-10, and Asp-129. Asp-10 serves as the catalytic Proton donor. The interval 191–382 is imidazoleglycerol-phosphate dehydratase; the sequence is RTALVERNTK…DNLPSTKGVL (192 aa).

This sequence in the N-terminal section; belongs to the histidinol-phosphatase family. The protein in the C-terminal section; belongs to the imidazoleglycerol-phosphate dehydratase family. Requires Mg(2+) as cofactor.

The protein resides in the cytoplasm. It catalyses the reaction D-erythro-1-(imidazol-4-yl)glycerol 3-phosphate = 3-(imidazol-4-yl)-2-oxopropyl phosphate + H2O. The enzyme catalyses L-histidinol phosphate + H2O = L-histidinol + phosphate. It participates in amino-acid biosynthesis; L-histidine biosynthesis; L-histidine from 5-phospho-alpha-D-ribose 1-diphosphate: step 6/9. The protein operates within amino-acid biosynthesis; L-histidine biosynthesis; L-histidine from 5-phospho-alpha-D-ribose 1-diphosphate: step 8/9. In Spirosoma linguale (strain ATCC 33905 / DSM 74 / LMG 10896 / Claus 1), this protein is Histidine biosynthesis bifunctional protein HisB.